The sequence spans 296 residues: 5,10-methylenetetrahydrofolate reductase (296 aa).

Catalysis depends on glutamate 28, which acts as the Proton donor/acceptor. Threonine 59 provides a ligand contact to NADH. Residues tyrosine 60, alanine 62, histidine 88, arginine 118, glycine 119, aspartate 120, alanine 132, tyrosine 152, histidine 156, alanine 159, aspartate 165, asparagine 168, arginine 171, and lysine 172 each contribute to the FAD site. Aspartate 120 contacts (6S)-5-methyl-5,6,7,8-tetrahydrofolate. Glutamine 183 provides a ligand contact to NADH. Residues glutamine 183, glutamine 219, and arginine 279 each coordinate (6S)-5-methyl-5,6,7,8-tetrahydrofolate.

The protein belongs to the methylenetetrahydrofolate reductase family. It depends on FAD as a cofactor.

It catalyses the reaction (6S)-5-methyl-5,6,7,8-tetrahydrofolate + NAD(+) = (6R)-5,10-methylene-5,6,7,8-tetrahydrofolate + NADH + H(+). Its pathway is one-carbon metabolism; tetrahydrofolate interconversion. The protein operates within amino-acid biosynthesis; L-methionine biosynthesis via de novo pathway. Functionally, catalyzes the NADH-dependent reduction of 5,10-methylenetetrahydrofolate to 5-methyltetrahydrofolate. Is required to provide the methyl group necessary for methionine synthetase to convert homocysteine to methionine; the methyl group is given by 5-methyltetrahydrofolate. This is 5,10-methylenetetrahydrofolate reductase (metF) from Salmonella typhimurium (strain LT2 / SGSC1412 / ATCC 700720).